A 600-amino-acid chain; its full sequence is Protein GPR107 (600 aa).

A signal peptide spans 1 to 39 (MAALAPVGSPASRGPRLAAGLRLLPMLGLLQLLAEPGLG). Residues 40 to 263 (RVHHLALKDD…YLSAGEIPLP (224 aa)) are Extracellular-facing. Residues Asn70 and Asn169 are each glycosylated (N-linked (GlcNAc...) asparagine). A disulfide bond links Cys109 and Cys228. Over residues 157–175 (SQEPNVNPASAGNQTQKTQ) the composition is skewed to polar residues. The interval 157 to 185 (SQEPNVNPASAGNQTQKTQDGGKSKRSTV) is disordered. The segment covering 176–185 (DGGKSKRSTV) has biased composition (basic and acidic residues). The N-linked (GlcNAc...) asparagine glycan is linked to Asn211. The chain crosses the membrane as a helical span at residues 264–284 (KLYISMAFFFFLSGTIWIHIL). Residues 285–293 (RKRRNDVFK) are Cytoplasmic-facing. Residues 294–314 (IHWLMAALPFTKSLSLVFHAI) form a helical membrane-spanning segment. Residues 315 to 337 (DYHYISSQGFPIEGWAVVYYITH) lie on the Extracellular side of the membrane. Residues 338-358 (LLKGALLFITIALIGTGWAFI) traverse the membrane as a helical segment. Residues 359–368 (KHILSDKDKK) are Cytoplasmic-facing. The helical transmembrane segment at 369 to 389 (IFMIVIPLQVLANVAYIIIES) threads the bilayer. Residues 390 to 402 (TEEGTTEYGLWKD) are Extracellular-facing. The helical transmembrane segment at 403-423 (SLFLVDLLCCGAILFPVVWSI) threads the bilayer. The Cytoplasmic segment spans residues 424–498 (RHLQEASATD…AKLKLFRHYY (75 aa)). The chain crosses the membrane as a helical span at residues 499-519 (VLIVCYIYFTRIIAFLLKLAV). The Extracellular portion of the chain corresponds to 520-524 (PFQWK). The helical transmembrane segment at 525 to 544 (WLYQLLDETATLVFFVLTGY) threads the bilayer. Residues 545 to 600 (KFRPASDNPYLQLSQEEEDLEMESVVTTSGVMESMKKVKKVTNGSVEPQGEWEGAV) lie on the Cytoplasmic side of the membrane.

Belongs to the LU7TM family. Post-translationally, cleaved by FURIN to yield two fragments of 17 and 35 kDa that remain associated via a disulfide bond.

It is found in the cell membrane. Its subcellular location is the golgi apparatus. The protein resides in the trans-Golgi network membrane. Its function is as follows. Has been proposed to act as a receptor for neuronostatin, a peptide derived from the somatostatin/SST precursor. Involved in blood sugar regulation through the induction of glucagon in response to low glucose. (Microbial infection) Required for intoxication by Pseudomonas aeruginosa exotoxin A and Campylobacter jejuni CDT. May contribute to the retrograde transport of bacterial toxins, including cholera toxin, from the trans-Golgi network to the endoplasmic reticulum. This is Protein GPR107 (GPR107) from Homo sapiens (Human).